The chain runs to 287 residues: Elongation factor Ts (287 aa).

The tract at residues 80–83 (TDFL) is involved in Mg(2+) ion dislocation from EF-Tu.

This sequence belongs to the EF-Ts family.

The protein resides in the cytoplasm. Its function is as follows. Associates with the EF-Tu.GDP complex and induces the exchange of GDP to GTP. It remains bound to the aminoacyl-tRNA.EF-Tu.GTP complex up to the GTP hydrolysis stage on the ribosome. The polypeptide is Elongation factor Ts (Pseudomonas fluorescens (strain Pf0-1)).